Reading from the N-terminus, the 169-residue chain is Peptide deformylase (169 aa).

Fe cation is bound by residues Cys-94 and His-136. The active site involves Glu-137. Position 140 (His-140) interacts with Fe cation.

It belongs to the polypeptide deformylase family. Requires Fe(2+) as cofactor.

It catalyses the reaction N-terminal N-formyl-L-methionyl-[peptide] + H2O = N-terminal L-methionyl-[peptide] + formate. Functionally, removes the formyl group from the N-terminal Met of newly synthesized proteins. Requires at least a dipeptide for an efficient rate of reaction. N-terminal L-methionine is a prerequisite for activity but the enzyme has broad specificity at other positions. The chain is Peptide deformylase from Phenylobacterium zucineum (strain HLK1).